A 377-amino-acid chain; its full sequence is Chaperone protein DnaJ (377 aa).

Positions 4–69 (DYYEVLGVSK…EKRARYDQMG (66 aa)) constitute a J domain. Residues 131-213 (GTEKEIQVPR…CSGKGTTRKV (83 aa)) form a CR-type zinc finger. The Zn(2+) site is built by Cys-144, Cys-147, Cys-161, Cys-164, Cys-187, Cys-190, Cys-201, and Cys-204. CXXCXGXG motif repeat units follow at residues 144-151 (CTECHGSG), 161-168 (CSQCHGTG), 187-194 (CPACNGSG), and 201-208 (CKECSGKG).

It belongs to the DnaJ family. As to quaternary structure, homodimer. It depends on Zn(2+) as a cofactor.

It localises to the cytoplasm. Functionally, participates actively in the response to hyperosmotic and heat shock by preventing the aggregation of stress-denatured proteins and by disaggregating proteins, also in an autonomous, DnaK-independent fashion. Unfolded proteins bind initially to DnaJ; upon interaction with the DnaJ-bound protein, DnaK hydrolyzes its bound ATP, resulting in the formation of a stable complex. GrpE releases ADP from DnaK; ATP binding to DnaK triggers the release of the substrate protein, thus completing the reaction cycle. Several rounds of ATP-dependent interactions between DnaJ, DnaK and GrpE are required for fully efficient folding. Also involved, together with DnaK and GrpE, in the DNA replication of plasmids through activation of initiation proteins. The chain is Chaperone protein DnaJ from Desulfitobacterium hafniense (strain DSM 10664 / DCB-2).